The sequence spans 124 residues: Ribonuclease pancreatic (124 aa).

The tract at residues 1 to 21 (AESSAMKFQRQHMDSDGHPDT) is disordered. Residues K7 and R10 each contribute to the substrate site. The active-site Proton acceptor is the H12. 4 disulfide bridges follow: C26–C84, C40–C95, C58–C110, and C65–C72. Substrate-binding positions include 41–45 (KPVNT), K66, and R85. H119 serves as the catalytic Proton donor.

This sequence belongs to the pancreatic ribonuclease family. In terms of assembly, monomer. Interacts with and forms tight 1:1 complexes with RNH1. Dimerization of two such complexes may occur. Interaction with RNH1 inhibits this protein. In terms of tissue distribution, pancreas.

It is found in the secreted. The enzyme catalyses an [RNA] containing cytidine + H2O = an [RNA]-3'-cytidine-3'-phosphate + a 5'-hydroxy-ribonucleotide-3'-[RNA].. It catalyses the reaction an [RNA] containing uridine + H2O = an [RNA]-3'-uridine-3'-phosphate + a 5'-hydroxy-ribonucleotide-3'-[RNA].. In terms of biological role, endonuclease that catalyzes the cleavage of RNA on the 3' side of pyrimidine nucleotides. Acts on single-stranded and double-stranded RNA. This Galea musteloides (Common yellow-toothed cavy) protein is Ribonuclease pancreatic (RNASE1).